The chain runs to 318 residues: Peptidyl-prolyl cis-trans isomerase CPR4 (318 aa).

Residues 1–20 form the signal peptide; sequence MWLKSLLLCLYSLVLCQVHA. Residues 55–225 enclose the PPIase cyclophilin-type domain; sequence YFDPVSKSMK…HELRFLYFVL (171 aa). A glycan (N-linked (GlcNAc...) asparagine) is linked at Asn166. Residues 286–303 form a helical membrane-spanning segment; it reads ISRALMCLTVLGLCFIAY.

It localises to the membrane. It carries out the reaction [protein]-peptidylproline (omega=180) = [protein]-peptidylproline (omega=0). Its function is as follows. PPIases accelerate the folding of proteins. It catalyzes the cis-trans isomerization of proline imidic peptide bonds in oligopeptides. This Saccharomyces cerevisiae (strain ATCC 204508 / S288c) (Baker's yeast) protein is Peptidyl-prolyl cis-trans isomerase CPR4 (CPR4).